The chain runs to 509 residues: Maturase K (509 aa).

This sequence belongs to the intron maturase 2 family. MatK subfamily.

Its subcellular location is the plastid. The protein resides in the chloroplast. Its function is as follows. Usually encoded in the trnK tRNA gene intron. Probably assists in splicing its own and other chloroplast group II introns. The chain is Maturase K from Vatairea macrocarpa.